A 362-amino-acid polypeptide reads, in one-letter code: Chorismate synthase (362 aa).

Arg46 serves as a coordination point for NADP(+). FMN is bound by residues Arg122–Ser124, Asn238–Ala239, Gly278, Lys293–Ser297, and Arg319.

This sequence belongs to the chorismate synthase family. In terms of assembly, homotetramer. FMNH2 is required as a cofactor.

The catalysed reaction is 5-O-(1-carboxyvinyl)-3-phosphoshikimate = chorismate + phosphate. It functions in the pathway metabolic intermediate biosynthesis; chorismate biosynthesis; chorismate from D-erythrose 4-phosphate and phosphoenolpyruvate: step 7/7. In terms of biological role, catalyzes the anti-1,4-elimination of the C-3 phosphate and the C-6 proR hydrogen from 5-enolpyruvylshikimate-3-phosphate (EPSP) to yield chorismate, which is the branch point compound that serves as the starting substrate for the three terminal pathways of aromatic amino acid biosynthesis. This reaction introduces a second double bond into the aromatic ring system. In Campylobacter jejuni (strain RM1221), this protein is Chorismate synthase.